Here is a 236-residue protein sequence, read N- to C-terminus: Small ribosomal subunit protein uS2c (236 aa).

This sequence belongs to the universal ribosomal protein uS2 family.

It is found in the plastid. The protein resides in the chloroplast. The polypeptide is Small ribosomal subunit protein uS2c (rps2) (Piper cenocladum (Ant piper)).